Here is a 377-residue protein sequence, read N- to C-terminus: N5-carboxyaminoimidazole ribonucleotide synthase (377 aa).

ATP-binding positions include Arg93, Lys133, 138–144, 175–178, Glu183, His206, and 257–258; these read GYDGKGQ, EEFV, and NE. Residues 97–287 form the ATP-grasp domain; that stretch reads KALLDRAQVA…QFENHLRAVC (191 aa).

The protein belongs to the PurK/PurT family. In terms of assembly, homodimer.

It carries out the reaction 5-amino-1-(5-phospho-beta-D-ribosyl)imidazole + hydrogencarbonate + ATP = 5-carboxyamino-1-(5-phospho-D-ribosyl)imidazole + ADP + phosphate + 2 H(+). It functions in the pathway purine metabolism; IMP biosynthesis via de novo pathway; 5-amino-1-(5-phospho-D-ribosyl)imidazole-4-carboxylate from 5-amino-1-(5-phospho-D-ribosyl)imidazole (N5-CAIR route): step 1/2. In terms of biological role, catalyzes the ATP-dependent conversion of 5-aminoimidazole ribonucleotide (AIR) and HCO(3)(-) to N5-carboxyaminoimidazole ribonucleotide (N5-CAIR). The polypeptide is N5-carboxyaminoimidazole ribonucleotide synthase (Vibrio cholerae serotype O1 (strain ATCC 39315 / El Tor Inaba N16961)).